Consider the following 128-residue polypeptide: Aspartate 1-decarboxylase (128 aa).

Ser-25 functions as the Schiff-base intermediate with substrate; via pyruvic acid in the catalytic mechanism. Residue Ser-25 is modified to Pyruvic acid (Ser). Thr-57 provides a ligand contact to substrate. Catalysis depends on Tyr-58, which acts as the Proton donor. 73 to 75 (GSA) serves as a coordination point for substrate.

The protein belongs to the PanD family. Heterooctamer of four alpha and four beta subunits. It depends on pyruvate as a cofactor. Is synthesized initially as an inactive proenzyme, which is activated by self-cleavage at a specific serine bond to produce a beta-subunit with a hydroxyl group at its C-terminus and an alpha-subunit with a pyruvoyl group at its N-terminus.

It is found in the cytoplasm. It carries out the reaction L-aspartate + H(+) = beta-alanine + CO2. It participates in cofactor biosynthesis; (R)-pantothenate biosynthesis; beta-alanine from L-aspartate: step 1/1. Its function is as follows. Catalyzes the pyruvoyl-dependent decarboxylation of aspartate to produce beta-alanine. The chain is Aspartate 1-decarboxylase from Paraburkholderia phytofirmans (strain DSM 17436 / LMG 22146 / PsJN) (Burkholderia phytofirmans).